We begin with the raw amino-acid sequence, 463 residues long: Chaperone SurA (463 aa).

The signal sequence occupies residues 1 to 25 (MTKPFSVVLASLLAITSTISPLASA). PpiC domains lie at 174-276 (GSKY…KLME) and 289-388 (VTEY…QRVG). 2 disordered regions span residues 329 to 348 (ATAKESSEDTNSRGQGGDLG) and 434 to 463 (GDRADNNATAAPAKSADPALPAPPPAKPTR). Positions 439 to 452 (NNATAAPAKSADPA) are enriched in low complexity. The span at 453–463 (LPAPPPAKPTR) shows a compositional bias: pro residues.

It is found in the periplasm. It catalyses the reaction [protein]-peptidylproline (omega=180) = [protein]-peptidylproline (omega=0). Chaperone involved in the correct folding and assembly of outer membrane proteins. Recognizes specific patterns of aromatic residues and the orientation of their side chains, which are found more frequently in integral outer membrane proteins. May act in both early periplasmic and late outer membrane-associated steps of protein maturation. In Xanthomonas oryzae pv. oryzae (strain MAFF 311018), this protein is Chaperone SurA.